The primary structure comprises 752 residues: Multifunctional tryptophan biosynthesis protein (752 aa).

Residues 3-202 (FTLLIDNYDS…IQMKGGKWGG (200 aa)) enclose the Glutamine amidotransferase type-1 domain. Residue 58–60 (GPG) coordinates L-glutamine. The Nucleophile; for GATase activity role is filled by Cys-86. 136–137 (SL) provides a ligand contact to L-glutamine. Residues His-176 and Glu-178 each act as for GATase activity in the active site. Positions 231-495 (ILNRIHAQRL…DTKAFLRSLI (265 aa)) are indole-3-glycerol phosphate synthase. The segment at 509 to 752 (LVKICGIRST…VEAFVKAVRG (244 aa)) is N-(5'-phosphoribosyl)anthranilate isomerase.

It carries out the reaction N-(5-phospho-beta-D-ribosyl)anthranilate = 1-(2-carboxyphenylamino)-1-deoxy-D-ribulose 5-phosphate. It catalyses the reaction 1-(2-carboxyphenylamino)-1-deoxy-D-ribulose 5-phosphate + H(+) = (1S,2R)-1-C-(indol-3-yl)glycerol 3-phosphate + CO2 + H2O. The catalysed reaction is chorismate + L-glutamine = anthranilate + pyruvate + L-glutamate + H(+). The protein operates within amino-acid biosynthesis; L-tryptophan biosynthesis; L-tryptophan from chorismate: step 1/5. Its pathway is amino-acid biosynthesis; L-tryptophan biosynthesis; L-tryptophan from chorismate: step 3/5. It participates in amino-acid biosynthesis; L-tryptophan biosynthesis; L-tryptophan from chorismate: step 4/5. Functionally, trifunctional enzyme bearing the Gln amidotransferase (GATase) domain of anthranilate synthase, indole-glycerolphosphate synthase, and phosphoribosylanthranilate isomerase activities. This is Multifunctional tryptophan biosynthesis protein (TRP1) from Cryptococcus neoformans var. neoformans serotype D (strain JEC21 / ATCC MYA-565) (Filobasidiella neoformans).